Here is a 29-residue protein sequence, read N- to C-terminus: GCKLTFWKCKNKKECCGWNACALGICMPR.

Disulfide bonds link cysteine 2–cysteine 16, cysteine 9–cysteine 21, and cysteine 15–cysteine 26.

It belongs to the neurotoxin 15 family. 01 (magi-5) subfamily. Expressed by the venom gland.

The protein localises to the secreted. Its function is as follows. Insect and vertebrate active toxin. Binds at site 4 of mammalian voltage-gated sodium channels and shifts the activation voltage of the mammalian rNav1.2a (SCN2A) channel to more hyperpolarized voltages, whereas the insect channel, DmNav1 (para), is not affected. Causes temporary paralysis when injected into lepidopteran larvae at 8.6 nmol/g. A low intracranial injection dose into mice causes lacrimation, closure of the eyes and sweating. A high injection dose causes extensive lacrimation and death. The chain is Beta-hexatoxin-Mr1a from Macrothele raveni (Funnel-web spider).